The chain runs to 567 residues: Urease subunit alpha (567 aa).

Residues 129 to 567 (GGIDTHIHFI…LPMAQRYFLF (439 aa)) form the Urease domain. Positions 134, 136, and 217 each coordinate Ni(2+). Lys-217 carries the post-translational modification N6-carboxylysine. Residue His-219 participates in substrate binding. Positions 246 and 272 each coordinate Ni(2+). His-320 acts as the Proton donor in catalysis. Asp-360 contacts Ni(2+).

The protein belongs to the metallo-dependent hydrolases superfamily. Urease alpha subunit family. In terms of assembly, probable heterotrimer of UreA (gamma), UreB (beta) and UreC (alpha) subunits. Three heterotrimers associate to form the active enzyme. The trimeric urease interacts with an accessory complex composed of UreD, UreF and UreG, which is required for the assembly of the nickel containing metallocenter of UreC. The UreE protein may also play a direct role in nickel transfer to the urease apoprotein. Ni cation is required as a cofactor. Carboxylation allows a single lysine to coordinate two nickel ions.

It localises to the cytoplasm. It carries out the reaction urea + 2 H2O + H(+) = hydrogencarbonate + 2 NH4(+). Its pathway is nitrogen metabolism; urea degradation; CO(2) and NH(3) from urea (urease route): step 1/1. This chain is Urease subunit alpha, found in Proteus mirabilis (strain HI4320).